A 445-amino-acid polypeptide reads, in one-letter code: Oxysterols receptor LXR-alpha (445 aa).

Disordered regions lie at residues 1–34 (MSLW…QGGN) and 63–86 (ALLP…KKGP). The interval 1–94 (MSLWLEASMP…GPAPKMLGNE (94 aa)) is transactivation AF-1; required for ligand-independent transactivation function. The segment at residues 93–168 (NELCSVCGDK…AGMREECVLS (76 aa)) is a DNA-binding region (nuclear receptor). NR C4-type zinc fingers lie at residues 96 to 116 (CSVC…CEGC) and 132 to 156 (CHSG…LRKC). Position 191 is a phosphoserine (serine 191). Residues 203–445 (QLSPEQLGMI…LLSEIWDVHE (243 aa)) form a transactivation AF-2; required for ligand-dependent transactivation function; mediates interaction with CCAR2 region. The 239-residue stretch at 207 to 445 (EQLGMIEKLV…LLSEIWDVHE (239 aa)) folds into the NR LBD domain.

The protein belongs to the nuclear hormone receptor family. NR1 subfamily. As to quaternary structure, heterodimer of NR1H3 and RXR (retinoic acid receptor). Interacts with CCAR2 (via N-terminus) in a ligand-independent manner. Interacts with SIRT1 and this interaction is inhibited by CCAR2. Ubiquitinated. Ubiquitination by UBR5 leads to its degradation: UBR5 specifically recognizes and binds ligand-bound NR1H3 when it is not associated with coactivators (NCOAs). In presence of NCOAs, the UBR5-degron is not accessible, preventing its ubiquitination and degradation.

Its subcellular location is the nucleus. The protein resides in the cytoplasm. Its function is as follows. Nuclear receptor that exhibits a ligand-dependent transcriptional activation activity. Interaction with retinoic acid receptor (RXR) shifts RXR from its role as a silent DNA-binding partner to an active ligand-binding subunit in mediating retinoid responses through target genes defined by LXRES. LXRES are DR4-type response elements characterized by direct repeats of two similar hexanuclotide half-sites spaced by four nucleotides. Plays an important role in the regulation of cholesterol homeostasis, regulating cholesterol uptake through MYLIP-dependent ubiquitination of LDLR, VLDLR and LRP8. Interplays functionally with RORA for the regulation of genes involved in liver metabolism. Induces LPCAT3-dependent phospholipid remodeling in endoplasmic reticulum (ER) membranes of hepatocytes, driving SREBF1 processing and lipogenesis. Via LPCAT3, triggers the incorporation of arachidonate into phosphatidylcholines of ER membranes, increasing membrane dynamics and enabling triacylglycerols transfer to nascent very low-density lipoprotein (VLDL) particles. Via LPCAT3 also counteracts lipid-induced ER stress response and inflammation, likely by modulating SRC kinase membrane compartmentalization and limiting the synthesis of lipid inflammatory mediators. This Mus musculus (Mouse) protein is Oxysterols receptor LXR-alpha (Nr1h3).